Consider the following 526-residue polypeptide: tRNA-2-methylthio-N(6)-dimethylallyladenosine synthase (526 aa).

The disordered stretch occupies residues 1 to 24 (MTQQLNHAKVNQHPGQATLPETAE). Residues 28–144 (RTYEVKTYGC…LPTLLQRAEH (117 aa)) form the MTTase N-terminal domain. [4Fe-4S] cluster is bound by residues C37, C73, C107, C181, C185, and C188. The region spanning 167–403 (RESAYAGWVS…MVVQEQVCEE (237 aa)) is the Radical SAM core domain. The TRAM domain occupies 406–477 (QKLIGTTVEL…PFFLIADSGV (72 aa)).

This sequence belongs to the methylthiotransferase family. MiaB subfamily. In terms of assembly, monomer. Requires [4Fe-4S] cluster as cofactor.

The protein localises to the cytoplasm. The enzyme catalyses N(6)-dimethylallyladenosine(37) in tRNA + (sulfur carrier)-SH + AH2 + 2 S-adenosyl-L-methionine = 2-methylsulfanyl-N(6)-dimethylallyladenosine(37) in tRNA + (sulfur carrier)-H + 5'-deoxyadenosine + L-methionine + A + S-adenosyl-L-homocysteine + 2 H(+). Catalyzes the methylthiolation of N6-(dimethylallyl)adenosine (i(6)A), leading to the formation of 2-methylthio-N6-(dimethylallyl)adenosine (ms(2)i(6)A) at position 37 in tRNAs that read codons beginning with uridine. This chain is tRNA-2-methylthio-N(6)-dimethylallyladenosine synthase, found in Corynebacterium glutamicum (strain R).